We begin with the raw amino-acid sequence, 110 residues long: Hydrogenase maturation factor HypA (110 aa).

Residue histidine 2 participates in Ni(2+) binding. Zn(2+) contacts are provided by cysteine 70, cysteine 73, cysteine 86, and cysteine 89.

Belongs to the HypA/HybF family.

Functionally, involved in the maturation of [NiFe] hydrogenases. Required for nickel insertion into the metal center of the hydrogenase. This Geobacter sp. (strain M21) protein is Hydrogenase maturation factor HypA.